Here is a 123-residue protein sequence, read N- to C-terminus: Protein Wnt-3b (123 aa).

A lipid anchor (O-palmitoleoyl serine; by PORCN) is attached at S1. Residues C89 and C104 are joined by a disulfide bond. An N-linked (GlcNAc...) asparagine glycan is attached at N90.

The protein belongs to the Wnt family. In terms of processing, palmitoleoylation is required for efficient binding to frizzled receptors. Depalmitoleoylation leads to Wnt signaling pathway inhibition.

It localises to the secreted. Its subcellular location is the extracellular space. The protein resides in the extracellular matrix. Its function is as follows. Ligand for members of the frizzled family of seven transmembrane receptors. Probable developmental protein. May be a signaling molecule which affects the development of discrete regions of tissues. Is likely to signal over only few cell diameters. This Meleagris gallopavo (Wild turkey) protein is Protein Wnt-3b (WNT3B).